The following is a 494-amino-acid chain: DNA-directed DNA/RNA polymerase mu (494 aa).

The segment at 1-24 is disordered; that stretch reads MLPKRRRARVGSPSGDAASSTPPS. Ser-12 is subject to Phosphoserine. Positions 22-122 constitute a BRCT domain; that stretch reads PPSTRFPGVA…QPVPVECRHR (101 aa). The segment at 323–332 is involved in ssDNA binding; it reads RGKLQGHDVD. Mg(2+) is bound by residues Asp-330, Asp-332, and Asp-418.

It belongs to the DNA polymerase type-X family. The cofactor is Mg(2+). In terms of tissue distribution, expressed in a number of tissues. Abundant in thymus.

The protein localises to the nucleus. The enzyme catalyses DNA(n) + a 2'-deoxyribonucleoside 5'-triphosphate = DNA(n+1) + diphosphate. Functionally, gap-filling polymerase involved in repair of DNA double-strand breaks by non-homologous end joining (NHEJ). Participates in immunoglobulin (Ig) light chain gene rearrangement in V(D)J recombination. The sequence is that of DNA-directed DNA/RNA polymerase mu (POLM) from Homo sapiens (Human).